The sequence spans 141 residues: Nucleoside diphosphate kinase (141 aa).

Residues Lys-11, Phe-59, Arg-87, Thr-93, Arg-104, and Asn-114 each coordinate ATP. The active-site Pros-phosphohistidine intermediate is His-117.

This sequence belongs to the NDK family. In terms of assembly, homotetramer. Mg(2+) serves as cofactor.

The protein localises to the cytoplasm. It carries out the reaction a 2'-deoxyribonucleoside 5'-diphosphate + ATP = a 2'-deoxyribonucleoside 5'-triphosphate + ADP. The enzyme catalyses a ribonucleoside 5'-diphosphate + ATP = a ribonucleoside 5'-triphosphate + ADP. Major role in the synthesis of nucleoside triphosphates other than ATP. The ATP gamma phosphate is transferred to the NDP beta phosphate via a ping-pong mechanism, using a phosphorylated active-site intermediate. The polypeptide is Nucleoside diphosphate kinase (Cellvibrio japonicus (strain Ueda107) (Pseudomonas fluorescens subsp. cellulosa)).